The primary structure comprises 53 residues: Metallothionein (53 aa).

This sequence belongs to the metallothionein superfamily. Type 14 family.

This protein complexes cadmium, zinc and copper. The polypeptide is Metallothionein (Synechococcus sp).